The chain runs to 456 residues: Cobyrinate a,c-diamide synthase (456 aa).

The GATase cobBQ-type domain maps to 247–439 (PIAIARDRAF…LHLHFGGKPW (193 aa)). Residue Cys-330 is the Nucleophile of the active site.

Belongs to the CobB/CbiA family. Mg(2+) is required as a cofactor.

It carries out the reaction cob(II)yrinate + 2 L-glutamine + 2 ATP + 2 H2O = cob(II)yrinate a,c diamide + 2 L-glutamate + 2 ADP + 2 phosphate + 2 H(+). Its pathway is cofactor biosynthesis; adenosylcobalamin biosynthesis; cob(II)yrinate a,c-diamide from sirohydrochlorin (anaerobic route): step 10/10. Functionally, catalyzes the ATP-dependent amidation of the two carboxylate groups at positions a and c of cobyrinate, using either L-glutamine or ammonia as the nitrogen source. The sequence is that of Cobyrinate a,c-diamide synthase from Synechococcus sp. (strain ATCC 27144 / PCC 6301 / SAUG 1402/1) (Anacystis nidulans).